The sequence spans 134 residues: Profilin-1 (134 aa).

Cysteine 13 and cysteine 118 are joined by a disulfide. An Involved in PIP2 interaction motif is present at residues 84 to 100 (AVVRGKKGSGGITIKKT). Position 114 is a phosphothreonine (threonine 114).

Belongs to the profilin family. As to quaternary structure, occurs in many kinds of cells as a complex with monomeric actin in a 1:1 ratio. Post-translationally, phosphorylated by MAP kinases.

It is found in the cytoplasm. The protein resides in the cytoskeleton. Its function is as follows. Binds to actin and affects the structure of the cytoskeleton. At high concentrations, profilin prevents the polymerization of actin, whereas it enhances it at low concentrations. The protein is Profilin-1 of Olea europaea (Common olive).